The primary structure comprises 117 residues: Probable non-functional immunoglobulin heavy variable 1-38-4 (117 aa).

The first 19 residues, Met-1–Ser-19, serve as a signal peptide directing secretion. Positions Gln-20–Ser-44 are framework-1. The region spanning Gln-20–Arg-117 is the Ig-like domain. Residues Gly-45–Gly-52 form a complementarity-determining-1 region. Positions Ile-53 to Trp-69 are framework-2. The complementarity-determining-2 stretch occupies residues Ile-70–Pro-77. Asn-74 carries an N-linked (GlcNAc...) asparagine glycan. Residues Ser-78–Tyr-115 form a framework-3 region. The interval Ala-116–Arg-117 is complementarity-determining-3.

As to quaternary structure, most probably, the immunoglobulin is not assembled due to incorrect folding of heavy chain. Immunoglobulins are composed of two identical heavy chains and two identical light chains; disulfide-linked.

It is found in the secreted. The protein localises to the cell membrane. Functionally, probable non-functional open reading frame (ORF) of V region of the variable domain of immunoglobulin heavy chains. Non-functional ORF generally cannot participate in the synthesis of a productive immunoglobulin chain due to altered V-(D)-J or switch recombination and/or splicing site (at mRNA level) and/or conserved amino acid change (protein level). Immunoglobulins, also known as antibodies, are membrane-bound or secreted glycoproteins produced by B lymphocytes. In the recognition phase of humoral immunity, the membrane-bound immunoglobulins serve as receptors which, upon binding of a specific antigen, trigger the clonal expansion and differentiation of B lymphocytes into immunoglobulins-secreting plasma cells. Secreted immunoglobulins mediate the effector phase of humoral immunity, which results in the elimination of bound antigens. The antigen binding site is formed by the variable domain of one heavy chain, together with that of its associated light chain. Thus, each immunoglobulin has two antigen binding sites with remarkable affinity for a particular antigen. The variable domains are assembled by a process called V-(D)-J rearrangement and can then be subjected to somatic hypermutations which, after exposure to antigen and selection, allow affinity maturation for a particular antigen. This Homo sapiens (Human) protein is Probable non-functional immunoglobulin heavy variable 1-38-4.